Consider the following 136-residue polypeptide: Histone H3.2 (136 aa).

The disordered stretch occupies residues 1-42; the sequence is MARTKQTARKSTGGKAPRKQLATKAARKSAPSAGGVKKPHRY. Lys5 carries the N6,N6,N6-trimethyllysine; alternate modification. The residue at position 5 (Lys5) is an N6,N6-dimethyllysine; alternate. 2 positions are modified to N6-methyllysine; alternate: Lys5 and Lys10. The residue at position 10 (Lys10) is an N6-acetyllysine; alternate. A Phosphoserine modification is found at Ser11. Position 15 is an N6,N6-dimethyllysine; alternate (Lys15). 5 positions are modified to N6-acetyllysine; alternate: Lys15, Lys19, Lys24, Lys28, and Lys37. N6-methyllysine; alternate is present on residues Lys19, Lys24, Lys28, and Lys37. An N6,N6,N6-trimethyllysine; alternate mark is found at Lys28 and Lys37. Lys28 and Lys37 each carry N6,N6-dimethyllysine; alternate. 2 positions are modified to N6-acetyllysine: Lys57 and Lys65. N6,N6,N6-trimethyllysine; alternate is present on Lys80. N6,N6-dimethyllysine; alternate is present on Lys80. Lys80 carries the N6-methyllysine; alternate modification.

Belongs to the histone H3 family. In terms of assembly, the nucleosome is a histone octamer containing two molecules each of H2A, H2B, H3 and H4 assembled in one H3-H4 heterotetramer and two H2A-H2B heterodimers. The octamer wraps approximately 147 bp of DNA. Post-translationally, phosphorylated to form H3S10ph. H3S10ph promotes subsequent H3K14ac formation and is required for transcriptional activation through TBP recruitment to the promoters. Mono-, di- and trimethylated by the COMPASS complex to form H3K4me1/2/3. H3K4me activates gene expression by regulating transcription elongation and plays a role in telomere length maintenance. H3K4me enrichment correlates with transcription levels, and occurs in a 5' to 3' gradient with H3K4me3 enrichment at the 5'-end of genes, shifting to H3K4me2 and then H3K4me1. Methylated by SET2 to form H3K36me. H3K36me represses gene expression. Methylated by DOT1 to form H3K79me. H3K79me is required for association of SIR proteins with telomeric regions and for telomeric silencing. The COMPASS-mediated formation of H3K4me2/3 and the DOT1-mediated formation of H3K79me require H2BK123ub1. In terms of processing, acetylation of histone H3 leads to transcriptional activation. H3K14ac formation by GCN5 is promoted by H3S10ph. H3K14ac can also be formed by ESA1. H3K56ac formation occurs predominantly in newly synthesized H3 molecules during G1, S and G2/M of the cell cycle and may be involved in DNA repair.

It localises to the nucleus. The protein localises to the chromosome. Core component of nucleosome. Nucleosomes wrap and compact DNA into chromatin, limiting DNA accessibility to the cellular machineries which require DNA as a template. Histones thereby play a central role in transcription regulation, DNA repair, DNA replication and chromosomal stability. DNA accessibility is regulated via a complex set of post-translational modifications of histones, also called histone code, and nucleosome remodeling. This Mycosarcoma maydis (Corn smut fungus) protein is Histone H3.2 (HHT2).